The following is a 196-amino-acid chain: Chromophore lyase CpcT/CpeT (196 aa).

This sequence belongs to the CpcT/CpeT biliprotein lyase family.

Covalently attaches a chromophore to Cys residue(s) of phycobiliproteins. The sequence is that of Chromophore lyase CpcT/CpeT from Thermosynechococcus vestitus (strain NIES-2133 / IAM M-273 / BP-1).